Here is an 863-residue protein sequence, read N- to C-terminus: MQELTPMMQQYMEIKQRVKDCILFFRLGDFYEMFFDDAIIASKELEIALTARDCGNNEKAPMCGVPYHSAHSYIAKLIEKGYKVAICEQVEDPKLAKGVVKREITRIITPGTFIDENFSKANNFICCVARVESDFALTFVDISTGEMYACLIENDIQKMINEISKYAPSEILISHLDNELYEVIRENYNSFVQRIEFIEIDRCYDLIDKQMQITNINDKVALSVGNLLNYLVDTQKISFNYIKKFEFYRVQNYLQIDLSTKRNLELTESIIARSKKNSLFGILDQAKTSMGSRLIKKWLERPLIDVVEINRRLDAVEELYNNFPLLMQIEGLLEGIYDIERLSSKFAYKSINAKDLLSLKKSIEVLPRLKELLGEFKSPLLKELYNELDTLEDVYSLIDSSINEDAPVGLKEGGIIKDGFNDHVDRLRNISKNSKELLIQYEEKERNLTGIKNLKIGYNKVFGYYIEVTKSNYSLVPERYIRKQTLANAERYVTEELKKLEDEIINAEQKLVELEYELFCQIRDKIESQIERIQKTASCIAIIDALCSFAHIAIDNRYTKPIVYLGDRIYIKNGRHPVVEKMIGYSNFVPNDTELDNDQNRVLIITGPNMAGKSTYMRQVALIVIMAQMGCFVPAEEAQIGIVDKIFSRIGASDDISSGQSTFMVEMSEVANILKNATPKSLIIFDEVGRGTSTYDGLSIAWAVLEFVADKSKIGAKTLFATHYHELTELEEKISGVKNYRVDVKEEGKNIIFLRKIVRGGCDSSYGIHVARLAGIPEEVLQRAEQILKKLEEADINRKEAKRLRKEIKREFTEQIEFFSYKKDEIIEKIENLDILNITPIQALNILSELKHEIIKAKERQLL.

An ATP-binding site is contributed by 607–614 (GPNMAGKS).

It belongs to the DNA mismatch repair MutS family.

Its function is as follows. This protein is involved in the repair of mismatches in DNA. It is possible that it carries out the mismatch recognition step. This protein has a weak ATPase activity. In Caldicellulosiruptor saccharolyticus (strain ATCC 43494 / DSM 8903 / Tp8T 6331), this protein is DNA mismatch repair protein MutS.